A 1145-amino-acid polypeptide reads, in one-letter code: Protocadherin-19 (1145 aa).

The N-terminal stretch at 1-21 is a signal peptide; that stretch reads MESLLLPVLLLLAVLWTQAAA. Cadherin domains lie at 22–129, 130–238, 239–346, 350–453, 454–563, and 569–672; these read LINL…APSF, PAAQ…NPVF, GEST…PPII, SVNS…HPHF, SKPY…TPVI, and INGT…QESM. At 22-678 the chain is on the extracellular side; it reads LINLKYSVEE…QESMGSVNLS (657 aa). Residues E31, E32, D88, and D90 each coordinate Ca(2+). C93 and C99 form a disulfide bridge. Ca(2+)-binding residues include D121, N123, D124, N125, E140, D155, D157, E199, D212, D230, S231, N232, D233, N234, and E249. N-linked (GlcNAc...) asparagine glycosylation occurs at N261. Ca(2+) is bound by residues D264, D266, N270, D305, E307, D338, N340, D341, N342, E360, D375, D377, N381, D412, and E414. N420 is a glycosylation site (N-linked (GlcNAc...) asparagine). Ca(2+) contacts are provided by D427, D445, E446, N447, D448, N449, E464, D479, D481, N485, N522, E524, and D537. N-linked (GlcNAc...) asparagine glycosylation is present at N485. N546 is a glycosylation site (N-linked (GlcNAc...) asparagine). The Ca(2+) site is built by D555, V556, N557, D558, and N559. N570 carries an N-linked (GlcNAc...) asparagine glycan. D594, D596, N600, and D646 together coordinate Ca(2+). N676 carries N-linked (GlcNAc...) asparagine glycosylation. The helical transmembrane segment at 679–699 threads the bilayer; the sequence is LIFIIALGSIAGILFVTMIFV. Residues 700–1145 lie on the Cytoplasmic side of the membrane; the sequence is AIKCKRDNKE…SVKRLKDIVL (446 aa). Disordered stretches follow at residues 901 to 921 and 1094 to 1145; these read GNSLKDSGHEESDQTDSEHDV and LEHH…DIVL. Composition is skewed to basic and acidic residues over residues 906 to 921 and 1106 to 1145; these read DSGHEESDQTDSEHDV and SEAEPRGADNEKVMHEVNPIRKDGRDKESPSVKRLKDIVL.

Homodimer; antiparallel.

The protein localises to the cell membrane. Functionally, calcium-dependent cell-adhesion protein. In Mus musculus (Mouse), this protein is Protocadherin-19 (Pcdh19).